A 124-amino-acid polypeptide reads, in one-letter code: Small ribosomal subunit protein uS13 (124 aa).

The tract at residues 99-124 (RGQRTRTNARTRKGPRKTVGVMRKKS) is disordered. Residues 101-124 (QRTRTNARTRKGPRKTVGVMRKKS) show a composition bias toward basic residues.

The protein belongs to the universal ribosomal protein uS13 family. Part of the 30S ribosomal subunit. Forms a loose heterodimer with protein S19. Forms two bridges to the 50S subunit in the 70S ribosome.

In terms of biological role, located at the top of the head of the 30S subunit, it contacts several helices of the 16S rRNA. In the 70S ribosome it contacts the 23S rRNA (bridge B1a) and protein L5 of the 50S subunit (bridge B1b), connecting the 2 subunits; these bridges are implicated in subunit movement. Contacts the tRNAs in the A and P-sites. The chain is Small ribosomal subunit protein uS13 from Caldicellulosiruptor saccharolyticus (strain ATCC 43494 / DSM 8903 / Tp8T 6331).